The sequence spans 236 residues: 1-(5-phosphoribosyl)-5-[(5-phosphoribosylamino)methylideneamino] imidazole-4-carboxamide isomerase (236 aa).

Residue aspartate 8 is the Proton acceptor of the active site. Residue aspartate 127 is the Proton donor of the active site.

The protein belongs to the HisA/HisF family.

It is found in the cytoplasm. The catalysed reaction is 1-(5-phospho-beta-D-ribosyl)-5-[(5-phospho-beta-D-ribosylamino)methylideneamino]imidazole-4-carboxamide = 5-[(5-phospho-1-deoxy-D-ribulos-1-ylimino)methylamino]-1-(5-phospho-beta-D-ribosyl)imidazole-4-carboxamide. It participates in amino-acid biosynthesis; L-histidine biosynthesis; L-histidine from 5-phospho-alpha-D-ribose 1-diphosphate: step 4/9. The sequence is that of 1-(5-phosphoribosyl)-5-[(5-phosphoribosylamino)methylideneamino] imidazole-4-carboxamide isomerase from Sulfurimonas denitrificans (strain ATCC 33889 / DSM 1251) (Thiomicrospira denitrificans (strain ATCC 33889 / DSM 1251)).